Consider the following 413-residue polypeptide: Sporulation-specific protein 74 (413 aa).

Residues 1 to 87 (MGAGTLLNGL…SEHTDDFNDG (87 aa)) are disordered. Basic and acidic residues predominate over residues 69–83 (HENKDIHERSEHTDD).

Interacts with itself. Interacts with MPC54, NUD1 and SPO21/MPC70.

It is found in the cytoplasm. The protein resides in the cytoskeleton. The protein localises to the microtubule organizing center. It localises to the spindle pole body. In terms of biological role, involved in the pathway that organizes the shaping and sizing of the prospore membrane (PSM) during sporulation. Probable component of a core structural unit of the scaffold that initiates synthesis of the prospore membrane. The chain is Sporulation-specific protein 74 (SPO74) from Saccharomyces cerevisiae (strain ATCC 204508 / S288c) (Baker's yeast).